We begin with the raw amino-acid sequence, 466 residues long: Uronate isomerase (466 aa).

Belongs to the metallo-dependent hydrolases superfamily. Uronate isomerase family.

The catalysed reaction is D-glucuronate = D-fructuronate. It catalyses the reaction aldehydo-D-galacturonate = keto-D-tagaturonate. Its pathway is carbohydrate metabolism; pentose and glucuronate interconversion. The chain is Uronate isomerase from Rhizorhabdus wittichii (strain DSM 6014 / CCUG 31198 / JCM 15750 / NBRC 105917 / EY 4224 / RW1) (Sphingomonas wittichii).